Consider the following 846-residue polypeptide: Leucine--tRNA ligase (846 aa).

The short motif at 42-52 is the 'HIGH' region element; it reads PYPSGNLHMGH. The 'KMSKS' region signature appears at 586 to 590; it reads KMSKS. Lys-589 contributes to the ATP binding site.

This sequence belongs to the class-I aminoacyl-tRNA synthetase family.

Its subcellular location is the cytoplasm. The enzyme catalyses tRNA(Leu) + L-leucine + ATP = L-leucyl-tRNA(Leu) + AMP + diphosphate. The sequence is that of Leucine--tRNA ligase from Heliobacterium modesticaldum (strain ATCC 51547 / Ice1).